A 351-amino-acid chain; its full sequence is Photosystem II D2 protein (351 aa).

Residues 39–59 traverse the membrane as a helical segment; it reads TAYLAIGGWLTGTTFVTSWYT. His-116 provides a ligand contact to chlorophyll a. A helical membrane pass occupies residues 123-139; that stretch reads GFMLRQFEIARLVGIRP. Pheophytin a-binding residues include Gln-128 and Asn-141. A helical membrane pass occupies residues 151 to 164; it reads VFVSVFLMYPLGQS. His-196 contributes to the chlorophyll a binding site. The chain crosses the membrane as a helical span at residues 206 to 226; sequence GALLCAIHGATVENTLFEDGE. The a plastoquinone site is built by His-213 and Phe-260. His-213 contacts Fe cation. His-267 is a Fe cation binding site. Residues 277–293 traverse the membrane as a helical segment; the sequence is GLWTSSIGIIGLALNLR.

The protein belongs to the reaction center PufL/M/PsbA/D family. As to quaternary structure, PSII is composed of 1 copy each of membrane proteins PsbA, PsbB, PsbC, PsbD, PsbE, PsbF, PsbH, PsbI, PsbJ, PsbK, PsbL, PsbM, PsbT, PsbX, PsbY, PsbZ, Psb30/Ycf12, peripheral proteins PsbO, CyanoQ (PsbQ), PsbU, PsbV and a large number of cofactors. It forms dimeric complexes. Requires The D1/D2 heterodimer binds P680, chlorophylls that are the primary electron donor of PSII, and subsequent electron acceptors. It shares a non-heme iron and each subunit binds pheophytin, quinone, additional chlorophylls, carotenoids and lipids. There is also a Cl(-1) ion associated with D1 and D2, which is required for oxygen evolution. The PSII complex binds additional chlorophylls, carotenoids and specific lipids. as cofactor.

It localises to the cellular thylakoid membrane. The catalysed reaction is 2 a plastoquinone + 4 hnu + 2 H2O = 2 a plastoquinol + O2. Its function is as follows. Photosystem II (PSII) is a light-driven water:plastoquinone oxidoreductase that uses light energy to abstract electrons from H(2)O, generating O(2) and a proton gradient subsequently used for ATP formation. It consists of a core antenna complex that captures photons, and an electron transfer chain that converts photonic excitation into a charge separation. The D1/D2 (PsbA/PsbD) reaction center heterodimer binds P680, the primary electron donor of PSII as well as several subsequent electron acceptors. D2 is needed for assembly of a stable PSII complex. This chain is Photosystem II D2 protein, found in Parasynechococcus marenigrum (strain WH8102).